The primary structure comprises 446 residues: Alkylglycerol monooxygenase (446 aa).

Transmembrane regions (helical) follow at residues 43–63 and 110–130; these read ATVY…AWKG and WDSP…YYWF. One can recognise a Fatty acid hydroxylase domain in the interval 118–248; that stretch reads LTFLGVDFGY…LIIWDRMFGT (131 aa). The short motif at 131–135 is the Histidine box-1 element; that stretch reads HRMAH. The short motif at 144–148 is the Histidine box-2 element; it reads HQTHH. A helical membrane pass occupies residues 167-187; sequence YFSWMFYWPMAFCIPPSVFAV. The short motif at 220–224 is the Histidine box-3 element; sequence HRVHH. 3 helical membrane passes run 339-359, 362-382, and 412-434; these read MMHF…KLIL, ATLL…GFIF, and VPYL…GLKA.

The protein belongs to the sterol desaturase family. TMEM195 subfamily. Requires Fe cation as cofactor.

Its subcellular location is the endoplasmic reticulum membrane. The catalysed reaction is 1-O-(1,2-saturated-alkyl)-sn-glycerol + (6R)-L-erythro-5,6,7,8-tetrahydrobiopterin + O2 = a 1-(1-hydroxyalkyl)-sn-glycerol + (6R)-L-erythro-6,7-dihydrobiopterin + H2O. In terms of biological role, glyceryl-ether monooxygenase that cleaves the O-alkyl bond of ether lipids. Ether lipids are essential components of brain membranes. This chain is Alkylglycerol monooxygenase (agmo), found in Xenopus tropicalis (Western clawed frog).